The following is a 116-amino-acid chain: Phosphoribosyl-AMP cyclohydrolase (116 aa).

Asp-78 provides a ligand contact to Mg(2+). Zn(2+) is bound at residue Cys-79. Mg(2+)-binding residues include Asp-80 and Asp-82. Cys-95 and Cys-102 together coordinate Zn(2+).

Belongs to the PRA-CH family. In terms of assembly, homodimer. It depends on Mg(2+) as a cofactor. Requires Zn(2+) as cofactor.

The protein localises to the cytoplasm. The enzyme catalyses 1-(5-phospho-beta-D-ribosyl)-5'-AMP + H2O = 1-(5-phospho-beta-D-ribosyl)-5-[(5-phospho-beta-D-ribosylamino)methylideneamino]imidazole-4-carboxamide. The protein operates within amino-acid biosynthesis; L-histidine biosynthesis; L-histidine from 5-phospho-alpha-D-ribose 1-diphosphate: step 3/9. Catalyzes the hydrolysis of the adenine ring of phosphoribosyl-AMP. This chain is Phosphoribosyl-AMP cyclohydrolase, found in Acidiphilium cryptum (strain JF-5).